The chain runs to 464 residues: Peptidase inhibitor 16 (464 aa).

The signal sequence occupies residues 1-27; sequence MHGSGSLLACLLPPLLLLGAAPGPAGA. Residues 37–165 enclose the SCP domain; it reads VELHNLYRTQ…TNIHLLVCNY (129 aa). Asn114 is a glycosylation site (N-linked (GlcNAc...) asparagine). Disordered regions lie at residues 208–241, 260–281, 304–347, and 386–412; these read DLSSLVPEAPSSLATEASSSRREGIDSSLATEPP, VETKAPSSLVTEDSPSMATKTP, PATL…LMGT, and TTLKHKGHSSSKSLSNSPSASATANAV. Positions 311–325 are enriched in basic and acidic residues; the sequence is STHDPIPKSADKEAS. Over residues 395–411 the composition is skewed to low complexity; that stretch reads SSKSLSNSPSASATANA.

It belongs to the CRISP family. In terms of assembly, interacts with PSP94/MSMB. In terms of processing, N-glycosylated.

The protein localises to the secreted. Functionally, may inhibit cardiomyocyte growth. This chain is Peptidase inhibitor 16 (PI16), found in Bos taurus (Bovine).